The chain runs to 140 residues: Small ribosomal subunit protein eS17x (140 aa).

This sequence belongs to the eukaryotic ribosomal protein eS17 family.

This is Small ribosomal subunit protein eS17x (RPS17C) from Arabidopsis thaliana (Mouse-ear cress).